We begin with the raw amino-acid sequence, 283 residues long: Bifunctional protein FolD (283 aa).

NADP(+) is bound by residues 165 to 167 (GRS), serine 190, and valine 231.

The protein belongs to the tetrahydrofolate dehydrogenase/cyclohydrolase family. Homodimer. Interacts with BrxC.

It catalyses the reaction (6R)-5,10-methylene-5,6,7,8-tetrahydrofolate + NADP(+) = (6R)-5,10-methenyltetrahydrofolate + NADPH. The catalysed reaction is (6R)-5,10-methenyltetrahydrofolate + H2O = (6R)-10-formyltetrahydrofolate + H(+). It functions in the pathway one-carbon metabolism; tetrahydrofolate interconversion. In terms of biological role, catalyzes the oxidation of 5,10-methylenetetrahydrofolate to 5,10-methenyltetrahydrofolate and then the hydrolysis of 5,10-methenyltetrahydrofolate to 10-formyltetrahydrofolate. This Bacillus subtilis (strain 168) protein is Bifunctional protein FolD.